The sequence spans 506 residues: L-amino-acid oxidase (506 aa).

The signal sequence occupies residues 1 to 18 (MNVFFTFSLLFLAALGSC). Cys-28 and Cys-191 are joined by a disulfide. Glu-36 serves as a coordination point for Zn(2+). Residues 61–62 (MS), Ser-62, 81–82 (EA), Arg-89, and 105–108 (GPMR) each bind FAD. Residue Arg-108 participates in substrate binding. Positions 111, 118, and 150 each coordinate Zn(2+). Asn-190 carries N-linked (GlcNAc...) asparagine glycosylation. Residue Asp-219 participates in Zn(2+) binding. His-241 is a substrate binding site. Glu-248 is a Zn(2+) binding site. Residue Val-279 coordinates FAD. The Zn(2+) site is built by Glu-299 and His-332. Residues Cys-349 and Cys-430 are joined by a disulfide bond. Substrate is bound at residue Tyr-390. His-458 provides a ligand contact to Zn(2+). FAD-binding positions include Glu-475 and 482–487 (GWIDST). Residue 482 to 483 (GW) participates in substrate binding.

This sequence belongs to the flavin monoamine oxidase family. FIG1 subfamily. Homodimer; non-covalently linked. Stabilized by a single zinc-binding site located at the dimer interface (Asp-219, His-332 and His-458). Other zinc-bind sites can be understood as transient and non-specific, and appear due to the high concentration of zinc ions used in the crystallization experiments. FAD is required as a cofactor. As to expression, expressed by the venom gland.

Its subcellular location is the secreted. It carries out the reaction an L-alpha-amino acid + O2 + H2O = a 2-oxocarboxylate + H2O2 + NH4(+). The catalysed reaction is L-leucine + O2 + H2O = 4-methyl-2-oxopentanoate + H2O2 + NH4(+). The enzyme catalyses L-phenylalanine + O2 + H2O = 3-phenylpyruvate + H2O2 + NH4(+). It catalyses the reaction L-tryptophan + O2 + H2O = indole-3-pyruvate + H2O2 + NH4(+). It carries out the reaction L-methionine + O2 + H2O = 4-methylsulfanyl-2-oxobutanoate + H2O2 + NH4(+). The catalysed reaction is L-isoleucine + O2 + H2O = (S)-3-methyl-2-oxopentanoate + H2O2 + NH4(+). The enzyme catalyses L-tyrosine + O2 + H2O = 3-(4-hydroxyphenyl)pyruvate + H2O2 + NH4(+). Catalyzes an oxidative deamination of predominantly hydrophobic and aromatic L-amino acids, thus producing hydrogen peroxide that may contribute to the diverse toxic effects of this enzyme. Shows high catalytic activity against L-Met, L-Leu, L-Phe, L-Trp, L-Tyr, L-Ile. Shows no or weak activity on L-Cys, L-Val, L-Gln, L-Thr, L-Ser, L-Lys, L-Arg, L-Asn, L-Glu, L-Gly, L-Pro, L-Asp and L-His. Induces platelet aggregation in platelet-rich plasma, probably due to hydrogen peroxide production, since catalase inhibits aggregation effect. Induces moderate mouse paw edema. Induces apoptosis and shows cytotoxicity against several cancer cell lines, which is inhibited by catalase. Shows hemolytic activity and antibacterial activities against both Gram-positive and Gram-negative bacteria. Has parasiticidal activities against both trypanosomes and leishmania, as a result of enzyme-catalyzed hydrogen peroxide production. Unlike other snake venom L-amino acid oxidases, does not induce hemorrhage (with 50 ug of enzyme). This chain is L-amino-acid oxidase, found in Bothrops atrox (Barba amarilla).